Consider the following 512-residue polypeptide: Chlorogenic acid esterase (512 aa).

Residues 1-18 form the signal peptide; that stretch reads MLLRLCIIATLLVSHCVA. N-linked (GlcNAc...) asparagine glycosylation is found at Asn-47, Asn-80, and Asn-98. Cysteines 92 and 120 form a disulfide. The active-site Acyl-ester intermediate is Ser-230. The N-linked (GlcNAc...) asparagine glycan is linked to Asn-271. Cys-281 and Cys-292 form a disulfide bridge. N-linked (GlcNAc...) asparagine glycosylation is found at Asn-295, Asn-322, and Asn-328. Glu-351 acts as the Charge relay system in catalysis. N-linked (GlcNAc...) asparagine glycans are attached at residues Asn-391 and Asn-402. His-416 serves as the catalytic Charge relay system. An N-linked (GlcNAc...) asparagine glycan is attached at Asn-474.

Belongs to the type-B carboxylesterase/lipase family.

It is found in the secreted. It catalyses the reaction chlorogenate + H2O = L-quinate + (E)-caffeate + H(+). Extracellular chlorogenic acid esterase that releases caffeic acid from chlorogenic acid (CGA) contained in natural substrates such as apple marc and coffee pulp. Shows no activity towards 5-O-p-coumaroyl quinic acid, another quinic ester derivative, and rosmarinic acid, another caffeic ester derivative. The sequence is that of Chlorogenic acid esterase from Aspergillus niger.